A 180-amino-acid polypeptide reads, in one-letter code: Inorganic pyrophosphatase (180 aa).

Substrate is bound by residues lysine 28, arginine 42, and tyrosine 54. Aspartate 66, aspartate 71, and aspartate 102 together coordinate Mg(2+). Residue tyrosine 139 participates in substrate binding.

It belongs to the PPase family. Homohexamer. Requires Mg(2+) as cofactor.

Its subcellular location is the cytoplasm. The enzyme catalyses diphosphate + H2O = 2 phosphate + H(+). Functionally, hydrolyzes PPi generated in anabolic reactions. Its function is as follows. Catalyzes the hydrolysis of inorganic pyrophosphate (PPi) forming two phosphate ions. The polypeptide is Inorganic pyrophosphatase (Pseudanabaena sp. (strain PCC 6903)).